Here is a 100-residue protein sequence, read N- to C-terminus: Putative protein adenylyltransferase MJ1379 (100 aa).

Residues 31 to 45 carry the GSX(10)DXD motif motif; sequence GSYARGEQTEESDID. Mg(2+) is bound by residues D43, D45, and D77.

Belongs to the MntA antitoxin family. Probably forms a complex with cognate toxin MJ1380. It depends on Mg(2+) as a cofactor.

The enzyme catalyses L-tyrosyl-[protein] + ATP = O-(5'-adenylyl)-L-tyrosyl-[protein] + diphosphate. It carries out the reaction O-(5'-adenylyl)-L-tyrosyl-[protein] + ATP = O-[5'-(adenylyl-(5'-&gt;3')-adenylyl)]-L-tyrosyl-[protein] + diphosphate. In terms of biological role, probable antitoxin component of a putative type VII toxin-antitoxin (TA) system. Neutralizes cognate toxic MJ1380 by di-AMPylation. The sequence is that of Putative protein adenylyltransferase MJ1379 from Methanocaldococcus jannaschii (strain ATCC 43067 / DSM 2661 / JAL-1 / JCM 10045 / NBRC 100440) (Methanococcus jannaschii).